The following is a 603-amino-acid chain: Serine/threonine-protein kinase HAL4/SAT4 (603 aa).

Polar residues-rich tracts occupy residues 1 to 15, 30 to 60, and 68 to 85; these read MTGMNDNNAAIPQQT, RSGSRSSRQGKASSNIQPPSNINTNVPSASK, and TPTTATPRVVSNPSNTAG. Disordered stretches follow at residues 1-86, 150-171, and 267-301; these read MTGM…TAGV, LSPKFSHHSNSNTAITPAPTPT, and DKYPEGAPTSGALNCPERDIYRSDQKDSKNNTHNI. Low complexity predominate over residues 159–171; it reads NSNTAITPAPTPT. Positions 282–296 are enriched in basic and acidic residues; that stretch reads PERDIYRSDQKDSKN. The Protein kinase domain maps to 316–590; sequence GRCQEVLGKG…GKQILNSEWG (275 aa). Residues 322–330 and Lys-353 contribute to the ATP site; that span reads LGKGAFGVV. The active-site Proton acceptor is Asp-449.

Belongs to the protein kinase superfamily. Ser/Thr protein kinase family.

It carries out the reaction L-seryl-[protein] + ATP = O-phospho-L-seryl-[protein] + ADP + H(+). The catalysed reaction is L-threonyl-[protein] + ATP = O-phospho-L-threonyl-[protein] + ADP + H(+). Functionally, promotes K(+) uptake, by the potassium transporter TRK1-TRK2, which leads to the subsequent cellular resistance to toxic cations such as Na(+), Li(+) and Ca(2+). In Saccharomyces cerevisiae (strain ATCC 204508 / S288c) (Baker's yeast), this protein is Serine/threonine-protein kinase HAL4/SAT4 (SAT4).